The primary structure comprises 94 residues: uncharacterized protein (94 aa).

Its function is as follows. Could be a silencing control element for the regulation of the restriction system. This is an uncharacterized protein from Herpetosiphon aurantiacus (Herpetosiphon giganteus).